Consider the following 103-residue polypeptide: Colicin-V (103 aa).

Residues 1–15 (MRTLTLNELDSVSGG) constitute a propeptide that is removed on maturation. C91 and C102 form a disulfide bridge.

The protein resides in the secreted. Colicin V kills sensitive cells by disrupting the membrane potential. Its function is as follows. Colicins are polypeptide toxins produced by, and active against E.coli and closely related bacteria. The protein is Colicin-V (cvaC) of Escherichia coli.